The primary structure comprises 328 residues: UDP-N-acetylglucosamine transporter YEA4 (328 aa).

The next 10 helical transmembrane spans lie at 1-21 (MSFV…VISF), 30-50 (INLG…IQLP), 66-86 (HIPL…SVAN), 98-118 (IHII…WAVC), 122-142 (YSKL…VASL), 166-186 (SMFG…LSLL), 198-218 (WKET…LGYT), 241-261 (LPIA…FICI), 274-294 (LTLS…SVYI), and 298-318 (VLSV…GLYS).

Belongs to the nucleotide-sugar transporter family. SLC35A subfamily.

It is found in the golgi apparatus membrane. Its function is as follows. Sugar transporter that specifically mediates the transport of UDP-N-acetylglucosamine (UDP-GlcNAc) from the cytosol into Golgi vesicles where glycosyltransferases function. The protein is UDP-N-acetylglucosamine transporter YEA4 (YEA4) of Kluyveromyces lactis (strain ATCC 8585 / CBS 2359 / DSM 70799 / NBRC 1267 / NRRL Y-1140 / WM37) (Yeast).